The following is a 423-amino-acid chain: Lysosomal acid phosphatase (423 aa).

Residues 1–30 (MAGKRSGWSRAALLQLLLGVNLVVMPPTRA) form the signal peptide. Over 31-380 (RSLRFVTLLY…QLASGPADTE (350 aa)) the chain is Lumenal. The Nucleophile role is filled by His42. N-linked (GlcNAc...) asparagine glycans are attached at residues Asn92, Asn133, Asn167, Asn177, Asn191, and Asn267. 3 disulfide bridges follow: Cys159/Cys370, Cys212/Cys310, and Cys345/Cys349. Asp287 serves as the catalytic Proton donor. N-linked (GlcNAc...) asparagine glycosylation is found at Asn322 and Asn331. A helical membrane pass occupies residues 381–401 (VIVALAVCGSILFLLIVLLLT). The Cytoplasmic segment spans residues 402-423 (VLFRMQAQPPGYRHVADGEDHA).

Belongs to the histidine acid phosphatase family. In terms of processing, the membrane-bound form is converted to the soluble form by sequential proteolytic processing. First, the C-terminal cytoplasmic tail is removed. Cleavage by a lysosomal protease releases the soluble form in the lysosome lumen. Post-translationally, N-glycosylated. The intermediates formed during enzymatic deglycosylation suggest that all eight predicted N-glycosylation sites are used.

Its subcellular location is the lysosome membrane. It localises to the lysosome lumen. The enzyme catalyses a phosphate monoester + H2O = an alcohol + phosphate. This chain is Lysosomal acid phosphatase (ACP2), found in Homo sapiens (Human).